Reading from the N-terminus, the 2389-residue chain is Highly reducing polyketide synthase Dhc3 (2389 aa).

The Ketosynthase family 3 (KS3) domain maps to 9–433; it reads DVPIAVVGLA…GTNGHAVLES (425 aa). Active-site for beta-ketoacyl synthase activity residues include cysteine 181, histidine 316, and histidine 356. The tract at residues 551 to 861 is malonyl-CoA:ACP transacylase (MAT) domain; sequence FVFTGQGAQW…LSGPVEQILN (311 aa). Catalysis depends on serine 641, which acts as the For malonyltransferase activity. An N-terminal hotdog fold region spans residues 944–1079; that stretch reads RSLIGAQVPM…GLITIDYADT (136 aa). One can recognise a PKS/mFAS DH domain in the interval 944 to 1263; it reads RSLIGAQVPM…VSELENDTEA (320 aa). The segment at 946-1262 is dehydratase (DH) domain; sequence LIGAQVPMMD…RVSELENDTE (317 aa). The active-site Proton acceptor; for dehydratase activity is the histidine 976. Residues 1107–1263 form a C-terminal hotdog fold region; the sequence is PDICSKEDFY…VSELENDTEA (157 aa). The Proton donor; for dehydratase activity role is filled by aspartate 1173. The segment at 1673–1987 is enoylreductase (ER) domain; the sequence is GLLDTLAFIE…QGKHRGKLVL (315 aa). The segment at 2011–2191 is catalytic ketoreductase (KRc) domain; sequence ATYLFVGGLG…VAVDLGIMRD (181 aa). Positions 2302–2379 constitute a Carrier domain; sequence EAVSIITDAL…EFAEKIAEKS (78 aa). An O-(pantetheine 4'-phosphoryl)serine modification is found at serine 2339.

It functions in the pathway mycotoxin biosynthesis. Highly reducing polyketide synthase; part of the gene cluster that mediates the biosynthesis of 10,11-dehydrocurvularin, a prevalent fungal phytotoxin with heat shock response and immune-modulatory activities. The highly reducing polyketide synthase Dhc3 is responsible for biosynthesis up to the tetraketide stage. The non-reducing polyketide synthase Dhc5 then conducts four additional chain extension cycles, producing the unreduced part of the nascent octaketide from C-1 to C-8 in 10,11-dehydrocurvularin. The chain is Highly reducing polyketide synthase Dhc3 (Dhc3) from Alternaria cinerariae.